The primary structure comprises 183 residues: Probable chemoreceptor glutamine deamidase CheD (183 aa).

It belongs to the CheD family.

It carries out the reaction L-glutaminyl-[protein] + H2O = L-glutamyl-[protein] + NH4(+). Probably deamidates glutamine residues to glutamate on methyl-accepting chemotaxis receptors (MCPs), playing an important role in chemotaxis. The polypeptide is Probable chemoreceptor glutamine deamidase CheD (Sinorhizobium medicae (strain WSM419) (Ensifer medicae)).